A 598-amino-acid polypeptide reads, in one-letter code: Arginine--tRNA ligase (598 aa).

Positions Ala139 to His149 match the 'HIGH' region motif.

Belongs to the class-I aminoacyl-tRNA synthetase family. As to quaternary structure, monomer.

It is found in the cytoplasm. The enzyme catalyses tRNA(Arg) + L-arginine + ATP = L-arginyl-tRNA(Arg) + AMP + diphosphate. This chain is Arginine--tRNA ligase, found in Bradyrhizobium sp. (strain ORS 278).